Here is a 395-residue protein sequence, read N- to C-terminus: Pyridinium-3,5-bisthiocarboxylic acid mononucleotide nickel insertion protein (395 aa).

Belongs to the LarC family.

The enzyme catalyses Ni(II)-pyridinium-3,5-bisthiocarboxylate mononucleotide = pyridinium-3,5-bisthiocarboxylate mononucleotide + Ni(2+). In terms of biological role, involved in the biosynthesis of a nickel-pincer cofactor ((SCS)Ni(II) pincer complex). Binds Ni(2+), and functions in nickel delivery to pyridinium-3,5-bisthiocarboxylic acid mononucleotide (P2TMN), to form the mature cofactor. Is thus probably required for the activation of nickel-pincer cofactor-dependent enzymes. The chain is Pyridinium-3,5-bisthiocarboxylic acid mononucleotide nickel insertion protein from Staphylococcus epidermidis (strain ATCC 35984 / DSM 28319 / BCRC 17069 / CCUG 31568 / BM 3577 / RP62A).